Reading from the N-terminus, the 509-residue chain is 2,3-bisphosphoglycerate-independent phosphoglycerate mutase (509 aa).

D11 contacts Mn(2+). A Phosphotyrosine modification is found at Y35. S61 contributes to the Mn(2+) binding site. Catalysis depends on S61, which acts as the Phosphoserine intermediate. Residues H122, 152–153, R184, R190, 260–263, and K335 each bind substrate; these read RD and RPDR. Mn(2+) contacts are provided by D402, H406, D443, H444, and H461.

The protein belongs to the BPG-independent phosphoglycerate mutase family. Monomer. Mn(2+) is required as a cofactor.

The catalysed reaction is (2R)-2-phosphoglycerate = (2R)-3-phosphoglycerate. It participates in carbohydrate degradation; glycolysis; pyruvate from D-glyceraldehyde 3-phosphate: step 3/5. Its function is as follows. Essential for rapid growth and for sporulation. Catalyzes the interconversion of 2-phosphoglycerate and 3-phosphoglycerate. In Bacillus thuringiensis (strain Al Hakam), this protein is 2,3-bisphosphoglycerate-independent phosphoglycerate mutase.